Here is a 68-residue protein sequence, read N- to C-terminus: Putative membrane protein insertion efficiency factor (68 aa).

The protein belongs to the UPF0161 family.

The protein resides in the cell membrane. Functionally, could be involved in insertion of integral membrane proteins into the membrane. The protein is Putative membrane protein insertion efficiency factor of Syntrophomonas wolfei subsp. wolfei (strain DSM 2245B / Goettingen).